The primary structure comprises 346 residues: Glucose-6-phosphatase 3 (346 aa).

Topologically, residues Met1–Met25 are lumenal. Residues Trp26–Val46 form a helical membrane-spanning segment. Topologically, residues Tyr47–Ser56 are cytoplasmic. The chain crosses the membrane as a helical span at residues Leu57–Gly77. The Lumenal portion of the chain corresponds to Asp78–Cys115. Position 79 (Arg79) interacts with substrate. His114 functions as the Proton donor in the catalytic mechanism. Residues Met116–Ser135 traverse the membrane as a helical segment. The Cytoplasmic segment spans residues Gln136–Pro140. The helical transmembrane segment at Trp141–Val162 threads the bilayer. Position 161 (Arg161) interacts with substrate. At Phe163–His167 the chain is on the lumenal side. His167 functions as the Nucleophile in the catalytic mechanism. The chain crosses the membrane as a helical span at residues Phe168 to Leu186. The Cytoplasmic portion of the chain corresponds to Ser187–Ser197. A helical transmembrane segment spans residues Phe198–Phe218. The Lumenal segment spans residues Thr219–Asp254. Residues Ser255–Ile273 form a helical membrane-spanning segment. At Arg274 to Lys283 the chain is on the cytoplasmic side. Residues Ile284–Pro304 form a helical membrane-spanning segment. At Gln305 to Ser307 the chain is on the lumenal side. Residues Leu308–Val328 traverse the membrane as a helical segment. Residues Pro329 to Ser346 lie on the Cytoplasmic side of the membrane.

Belongs to the glucose-6-phosphatase family. Expressed in liver and kidney. It is the major glucose-6-phosphatase expressed in the small intestine.

It is found in the endoplasmic reticulum membrane. It carries out the reaction D-glucose 6-phosphate + H2O = D-glucose + phosphate. The protein operates within carbohydrate biosynthesis; gluconeogenesis. Its activity is regulated as follows. Inhibited by vanadate. Functionally, hydrolyzes glucose-6-phosphate to glucose in the endoplasmic reticulum. May form with the glucose-6-phosphate transporter (SLC37A4/G6PT) a ubiquitously expressed complex responsible for glucose production through glycogenolysis and gluconeogenesis. Probably required for normal neutrophil function. This chain is Glucose-6-phosphatase 3 (G6pc3), found in Rattus norvegicus (Rat).